The chain runs to 121 residues: MAPKKAPAAAEKKVKKAPTTEKKNKKKRSETFAIYIFKVLKQVHPDVGISKKAMNIMNSFINDSFERIALESSKLVRFNKRRTLSSREVQTAVKLLLPGELARHAISEGTKAVTKFSSSTN.

The interval 1-27 is disordered; it reads MAPKKAPAAAEKKVKKAPTTEKKNKKK. A2 bears the N,N,N-trimethylalanine mark. An N6-acetyllysine mark is found at K5 and K41. K115 participates in a covalent cross-link: Glycyl lysine isopeptide (Lys-Gly) (interchain with G-Cter in ubiquitin).

Belongs to the histone H2B family. The nucleosome is a histone octamer containing two molecules each of H2A, H2B, H3 and H4 assembled in one H3-H4 heterotetramer and two H2A-H2B heterodimers. The octamer wraps approximately 147 bp of DNA. Monoubiquitination of Lys-115 gives a specific tag for epigenetic transcriptional activation and is also prerequisite for histone H3 'Lys-4' and 'Lys-79' methylation. In terms of processing, acetylation occurs almost exclusively in the MAC.

Its subcellular location is the nucleus. It localises to the chromosome. Its function is as follows. Core component of nucleosome. Nucleosomes wrap and compact DNA into chromatin, limiting DNA accessibility to the cellular machineries which require DNA as a template. Histones thereby play a central role in transcription regulation, DNA repair, DNA replication and chromosomal stability. DNA accessibility is regulated via a complex set of post-translational modifications of histones, also called histone code, and nucleosome remodeling. The chain is Histone H2B from Tetrahymena pyriformis.